The sequence spans 170 residues: Tubulin polymerization-promoting protein family member 2 (170 aa).

The span at 105–117 shows a compositional bias: low complexity; it reads TTGVTKSTTVGGV. The interval 105–170 is disordered; that stretch reads TTGVTKSTTV…GAGTYDKKNQ (66 aa). Over residues 129-149 the composition is skewed to basic and acidic residues; the sequence is THKERFDESGKGKGIEGREET.

Belongs to the TPPP family. As to expression, only expressed in male reproductive organs, including testis. Expressed in elongating spermatids at stages IV-VIII of the seminiferous epithelial cycle in testis and in mature sperm in the epididymis.

It is found in the cytoplasm. Its subcellular location is the cytosol. The protein localises to the cell projection. It localises to the cilium. The protein resides in the flagellum. Its function is as follows. Probable regulator of microtubule dynamics required for sperm motility. In contrast to other members of the family, has no microtubule bundling activity. In Mus musculus (Mouse), this protein is Tubulin polymerization-promoting protein family member 2.